The sequence spans 669 residues: Dymeclin (669 aa).

A lipid anchor (N-myristoyl glycine) is attached at G2.

This sequence belongs to the dymeclin family. Myristoylated in vitro; myristoylation is not essential for protein targeting to Golgi compartment.

The protein resides in the cytoplasm. It localises to the golgi apparatus. Functionally, necessary for correct organization of Golgi apparatus. The chain is Dymeclin (DYM) from Gallus gallus (Chicken).